The primary structure comprises 306 residues: Acetyl-coenzyme A carboxylase carboxyl transferase subunit beta (306 aa).

Residues 25–294 form the CoA carboxyltransferase N-terminal domain; sequence LWIKCPETGE…TVVGANDDKT (270 aa).

It belongs to the AccD/PCCB family. Acetyl-CoA carboxylase is a heterohexamer composed of biotin carboxyl carrier protein (AccB), biotin carboxylase (AccC) and two subunits each of ACCase subunit alpha (AccA) and ACCase subunit beta (AccD).

Its subcellular location is the cytoplasm. The catalysed reaction is N(6)-carboxybiotinyl-L-lysyl-[protein] + acetyl-CoA = N(6)-biotinyl-L-lysyl-[protein] + malonyl-CoA. Its pathway is lipid metabolism; malonyl-CoA biosynthesis; malonyl-CoA from acetyl-CoA: step 1/1. Functionally, component of the acetyl coenzyme A carboxylase (ACC) complex. Biotin carboxylase (BC) catalyzes the carboxylation of biotin on its carrier protein (BCCP) and then the CO(2) group is transferred by the transcarboxylase to acetyl-CoA to form malonyl-CoA. This chain is Acetyl-coenzyme A carboxylase carboxyl transferase subunit beta, found in Allorhizobium ampelinum (strain ATCC BAA-846 / DSM 112012 / S4) (Agrobacterium vitis (strain S4)).